The chain runs to 319 residues: Vesicle-associated membrane protein-associated protein scs22 (319 aa).

The 121-residue stretch at 1–121 folds into the MSP domain; the sequence is MALECDSTIV…SERKIRCVYS (121 aa). Residues 1–298 lie on the Cytoplasmic side of the membrane; that stretch reads MALECDSTIV…GAKVVPQIHN (298 aa). The segment covering 127 to 150 has biased composition (low complexity); sequence ANAHANAHHQPAQTTTTSIPTSAT. The disordered stretch occupies residues 127 to 244; it reads ANAHANAHHQ…TTSPNNENNA (118 aa). 3 stretches are compositionally biased toward polar residues: residues 151–165, 185–201, and 231–244; these read DNYT…QSYS, STAT…SAVS, and SVPT…ENNA. Thr-236 bears the Phosphothreonine mark. Residues Ser-237 and Ser-281 each carry the phosphoserine modification. A helical; Anchor for type IV membrane protein membrane pass occupies residues 299–319; it reads TVTVQTAFLLAIICFLIGLLF.

Belongs to the VAMP-associated protein (VAP) (TC 9.B.17) family. As to quaternary structure, interacts with epr1.

It localises to the endoplasmic reticulum membrane. Vesicle-associated membrane protein-associated protein (VAP) implicated in maintaining the cortical endoplasmic reticulum (ER)-plasma membrane (PM) attachment. ER-PM contacts function to modulate the distribution of contractile ring components to ensure robust ring assembly. ER-PM contacts function also in controlling exocytosis and maintenance of cell polarity regulating cell shape. VAPs play an important role in regulating eisosome assembly. VAPs also contribute to ER-phagy by tethering atg8 to the ER membrane, but also by maintaining the ER-plasma membrane contact. In Schizosaccharomyces pombe (strain 972 / ATCC 24843) (Fission yeast), this protein is Vesicle-associated membrane protein-associated protein scs22 (scs22).